Here is a 558-residue protein sequence, read N- to C-terminus: Ribonuclease J (558 aa).

The Zn(2+) site is built by histidine 81, histidine 83, aspartate 85, histidine 86, histidine 148, and aspartate 170. Position 371 to 375 (371 to 375) interacts with substrate; that stretch reads HVSGH. Zn(2+) is bound at residue histidine 397.

It belongs to the metallo-beta-lactamase superfamily. RNA-metabolizing metallo-beta-lactamase-like family. Bacterial RNase J subfamily. In terms of assembly, homodimer. Requires Zn(2+) as cofactor.

It is found in the cytoplasm. In terms of biological role, an RNase that has endonuclease and 5'-3' exonuclease activity. The 5'-exonuclease activity acts on 5'-monophosphate but not 5'-triphosphate ends. Endonuclease activity can cleave within 4 nucleotides of the 5'-end of a triphosphorylated RNA. Plays the major role in pre-23S rRNA maturation, and a minor role in processing of pre-5S and pre-16S rRNA. The chain is Ribonuclease J from Mycolicibacterium smegmatis (strain ATCC 700084 / mc(2)155) (Mycobacterium smegmatis).